Reading from the N-terminus, the 381-residue chain is Lipopolysaccharide 1,2-N-acetylglucosaminetransferase (381 aa).

This sequence belongs to the glycosyltransferase group 1 family. Glycosyltransferase 4 subfamily.

It is found in the cell inner membrane. It catalyses the reaction UDP-N-acetyl-alpha-D-glucosamine + [lipopolysaccharide] = UDP + N-acetyl-alpha-D-glucosaminyl-[lipopolysaccharide].. Its pathway is bacterial outer membrane biogenesis; LPS core biosynthesis. Functionally, transferase involved in the biosynthesis of the core oligosaccharide region of lipopolysaccharide (LPS). Catalyzes the addition of the terminal N-acetyl-D-glucosamine (GlcNAc) group to the outer-core glucose II, the last step of the lipid A-core oligosaccharide biosynthesis. The chain is Lipopolysaccharide 1,2-N-acetylglucosaminetransferase from Salmonella typhimurium (strain LT2 / SGSC1412 / ATCC 700720).